We begin with the raw amino-acid sequence, 396 residues long: Bifunctional enzyme Fae/Hps (396 aa).

Positions 1–161 are formaldehyde-activating enzyme; the sequence is MMLIGEALIG…HEKDRAAHAV (161 aa). His17 functions as the Proton donor in the catalytic mechanism. Residues Asp19, Leu48, Lys66, Thr68, and Gln83 each coordinate substrate. The segment at 162-396 is 3-hexulose-6-phosphate synthase; the sequence is MGFKISKLWD…IDQFRIMTDF (235 aa).

The protein in the N-terminal section; belongs to the formaldehyde-activating enzyme family. It in the C-terminal section; belongs to the HPS/KGPDC family. HPS subfamily.

It carries out the reaction 5,6,7,8-tetrahydromethanopterin + formaldehyde = 5,10-methylenetetrahydromethanopterin + H2O. It catalyses the reaction D-ribulose 5-phosphate + formaldehyde = D-arabino-hex-3-ulose 6-phosphate. Its pathway is carbohydrate biosynthesis; D-ribose 5-phosphate biosynthesis. Its function is as follows. Catalyzes the condensation of formaldehyde with tetrahydromethanopterin (H(4)MPT) to 5,10-methylenetetrahydromethanopterin. Functionally, catalyzes the reversible formation of ribulose-5-phosphate and formaldehyde from 3-hexulose-6-phosphate. This chain is Bifunctional enzyme Fae/Hps, found in Methanococcoides burtonii (strain DSM 6242 / NBRC 107633 / OCM 468 / ACE-M).